The chain runs to 160 residues: Cytochrome b6-f complex subunit 4 (160 aa).

3 helical membrane passes run Leu36 to Val56, Leu95 to Glu115, and Ala131 to Ile151.

This sequence belongs to the cytochrome b family. PetD subfamily. As to quaternary structure, the 4 large subunits of the cytochrome b6-f complex are cytochrome b6, subunit IV (17 kDa polypeptide, petD), cytochrome f and the Rieske protein, while the 4 small subunits are petG, petL, petM and petN. The complex functions as a dimer.

The protein resides in the plastid. It localises to the chloroplast thylakoid membrane. Functionally, component of the cytochrome b6-f complex, which mediates electron transfer between photosystem II (PSII) and photosystem I (PSI), cyclic electron flow around PSI, and state transitions. The polypeptide is Cytochrome b6-f complex subunit 4 (Bigelowiella natans (Pedinomonas minutissima)).